The sequence spans 265 residues: Putative hydro-lyase PA2116 (265 aa).

This sequence belongs to the D-glutamate cyclase family.

In Pseudomonas aeruginosa (strain ATCC 15692 / DSM 22644 / CIP 104116 / JCM 14847 / LMG 12228 / 1C / PRS 101 / PAO1), this protein is Putative hydro-lyase PA2116.